Here is a 107-residue protein sequence, read N- to C-terminus: NLWQFEMLIMKIALTSGFMFYSSYGCYCGWGGHGRPKDASDRCCFVHDCCYGKVTTCNPKFGVVVCGGDDPCKKQICECDRVAATCFRDNKYWFYGAKXCQEESDPC.

7 disulfide bridges follow: C26-C100, C28-C44, C43-C86, C49-C107, C50-C79, C57-C72, and C66-C77. The Ca(2+) site is built by Y27, G29, and G31. Residue H47 is part of the active site. D48 contributes to the Ca(2+) binding site. D80 is an active-site residue.

In terms of assembly, monomer. Ca(2+) serves as cofactor. Expressed by the venom gland.

The protein localises to the secreted. The catalysed reaction is a 1,2-diacyl-sn-glycero-3-phosphocholine + H2O = a 1-acyl-sn-glycero-3-phosphocholine + a fatty acid + H(+). Functionally, snake venom phospholipase A2 (PLA2) that induces significant edematogenic activity. Shows mild cytotoxicity on Trypanosoma cruzi and Leishmania infantum. Also inhibits ADP- and collagen-induced platelet aggregation. Does not show myotoxic activity. This Bothrops brazili (Brazil's lancehead) protein is Acidic phospholipase A2 braziliase-I.